Here is a 95-residue protein sequence, read N- to C-terminus: Putative septation protein SpoVG (95 aa).

This sequence belongs to the SpoVG family.

In terms of biological role, could be involved in septation. In Clostridium botulinum (strain ATCC 19397 / Type A), this protein is Putative septation protein SpoVG.